We begin with the raw amino-acid sequence, 346 residues long: GTPase Obg (346 aa).

The Obg domain occupies 1 to 158 (MKFLDQVKIY…RAIWLRLKLI (158 aa)). The region spanning 159 to 327 (ADVGLVGLPN…LLREAFALVR (169 aa)) is the OBG-type G domain. GTP-binding positions include 165–172 (GLPNAGKS), 190–194 (FTTLA), 212–215 (DIPG), 279–282 (NKID), and 308–310 (SGF). Mg(2+)-binding residues include Ser172 and Thr192.

This sequence belongs to the TRAFAC class OBG-HflX-like GTPase superfamily. OBG GTPase family. In terms of assembly, monomer. Mg(2+) is required as a cofactor.

It is found in the cytoplasm. In terms of biological role, an essential GTPase which binds GTP, GDP and possibly (p)ppGpp with moderate affinity, with high nucleotide exchange rates and a fairly low GTP hydrolysis rate. Plays a role in control of the cell cycle, stress response, ribosome biogenesis and in those bacteria that undergo differentiation, in morphogenesis control. The polypeptide is GTPase Obg (Phenylobacterium zucineum (strain HLK1)).